A 474-amino-acid chain; its full sequence is MTENSELNNKISTIKLKKLIEIQNLTDNMNGTVIRIRGFIESITSCSSQIFILLRDRLEKVQCIIFKSTNVSSIYEFSRLKKLPLESFIEIEGQVVFAEIPIKRATKQNIEIVISTLNILGPVVSKLPFQLKDCKIAGKESDTNTITVGYNLRLDNRFLDFRLPVTQSIIKIIDQTMYTFRTYLRTHEFIEIKTSKIIQSGSEGGANLFSLNYFNKPAYLAQSPQLYKQLAIIGGLKRVYEIGHVYRAEVSNINRYLSEFVGLDIEMEMETTYIDFIHFLHSLFINIFESFKNEMKKELEIIRQYYEFVDLKYRSTPIIITYKDAVDMLKSKNIQIDYGCDFSREHERILGKIIKDKEDIDIFTIIDYPSSIRAFYSYIDETTKLTRSYDFIVRGEEILSGAQRENRYDYLKNAVIDKGLNPENLKNYLEAFKYGAPPHIGCGIGLERFLKAYFGFDDIRYFSLFPRDPNRIFP.

An L-aspartate-binding site is contributed by Glu-203. Positions 225-228 (QLYK) are aspartate. Residue Arg-247 coordinates L-aspartate. ATP contacts are provided by residues 247-249 (RAE), 255-257 (RYL), and Glu-397. Residues Ser-400 and Arg-404 each coordinate L-aspartate. Residue 445 to 448 (GLER) coordinates ATP.

This sequence belongs to the class-II aminoacyl-tRNA synthetase family. Type 2 subfamily. In terms of assembly, homodimer.

It is found in the cytoplasm. It catalyses the reaction tRNA(Asp) + L-aspartate + ATP = L-aspartyl-tRNA(Asp) + AMP + diphosphate. The chain is Probable aspartate--tRNA ligase, cytoplasmic from Enterocytozoon bieneusi (strain H348) (Microsporidian parasite).